The chain runs to 241 residues: Ribosomal RNA large subunit methyltransferase E (241 aa).

Positions 88, 90, 111, 127, and 151 each coordinate S-adenosyl-L-methionine. The active-site Proton acceptor is the Lys-191.

It belongs to the class I-like SAM-binding methyltransferase superfamily. RNA methyltransferase RlmE family.

Its subcellular location is the cytoplasm. It carries out the reaction uridine(2552) in 23S rRNA + S-adenosyl-L-methionine = 2'-O-methyluridine(2552) in 23S rRNA + S-adenosyl-L-homocysteine + H(+). Its function is as follows. Specifically methylates the uridine in position 2552 of 23S rRNA at the 2'-O position of the ribose in the fully assembled 50S ribosomal subunit. In Bartonella quintana (strain Toulouse) (Rochalimaea quintana), this protein is Ribosomal RNA large subunit methyltransferase E.